A 340-amino-acid polypeptide reads, in one-letter code: Anthranilate phosphoribosyltransferase (340 aa).

Residues Gly-78, 81–82, Thr-86, 88–91, 106–114, and Ser-118 each bind 5-phospho-alpha-D-ribose 1-diphosphate; these read GD, NIST, and KHGNRSVSS. Gly-78 is a binding site for anthranilate. Residue Ser-90 coordinates Mg(2+). An anthranilate-binding site is contributed by Asn-109. Residue Arg-164 participates in anthranilate binding. Mg(2+) contacts are provided by Asp-223 and Glu-224.

This sequence belongs to the anthranilate phosphoribosyltransferase family. In terms of assembly, homodimer. Mg(2+) is required as a cofactor.

The enzyme catalyses N-(5-phospho-beta-D-ribosyl)anthranilate + diphosphate = 5-phospho-alpha-D-ribose 1-diphosphate + anthranilate. The protein operates within amino-acid biosynthesis; L-tryptophan biosynthesis; L-tryptophan from chorismate: step 2/5. Functionally, catalyzes the transfer of the phosphoribosyl group of 5-phosphorylribose-1-pyrophosphate (PRPP) to anthranilate to yield N-(5'-phosphoribosyl)-anthranilate (PRA). This chain is Anthranilate phosphoribosyltransferase, found in Bacillus pumilus (Bacillus mesentericus).